Reading from the N-terminus, the 305-residue chain is HTH-type transcriptional regulator KdgR (305 aa).

Positions 55–116 (VSSVLKVFGI…GESEKYSLTL (62 aa)) constitute an HTH iclR-type domain. The segment at residues 76–95 (ITELSQRVMMSKSTVYRFLQ) is a DNA-binding region (H-T-H motif). Residues 131 to 300 (LIRSADIQMR…ARNISDQMGY (170 aa)) enclose the IclR-ED domain.

Homodimer.

It is found in the cytoplasm. Functionally, transcriptional repressor that negatively regulates the expression of genes involved in pectinolysis and in pectinase secretion. Controls genes involved in pectin catabolism, including the pectinase genes (pelA, pelB, pelC, pelE), genes involved in pectin catabolism (kdgT, ogl, kduI-kdgF) and the outT gene involved in pectinase secretion. Acts by binding directly to KdgR binding sites (KdgR-box) in the gene operator/promoter region. This Dickeya chrysanthemi (Pectobacterium chrysanthemi) protein is HTH-type transcriptional regulator KdgR.